Reading from the N-terminus, the 225-residue chain is Phosphoribosylformylglycinamidine synthase subunit PurQ (225 aa).

One can recognise a Glutamine amidotransferase type-1 domain in the interval 5 to 225 (RFGIVVFPGS…WQSIVQSLAG (221 aa)). Catalysis depends on Cys-89, which acts as the Nucleophile. Catalysis depends on residues His-198 and Glu-200.

In terms of assembly, part of the FGAM synthase complex composed of 1 PurL, 1 PurQ and 2 PurS subunits.

The protein resides in the cytoplasm. It carries out the reaction N(2)-formyl-N(1)-(5-phospho-beta-D-ribosyl)glycinamide + L-glutamine + ATP + H2O = 2-formamido-N(1)-(5-O-phospho-beta-D-ribosyl)acetamidine + L-glutamate + ADP + phosphate + H(+). It catalyses the reaction L-glutamine + H2O = L-glutamate + NH4(+). It functions in the pathway purine metabolism; IMP biosynthesis via de novo pathway; 5-amino-1-(5-phospho-D-ribosyl)imidazole from N(2)-formyl-N(1)-(5-phospho-D-ribosyl)glycinamide: step 1/2. In terms of biological role, part of the phosphoribosylformylglycinamidine synthase complex involved in the purines biosynthetic pathway. Catalyzes the ATP-dependent conversion of formylglycinamide ribonucleotide (FGAR) and glutamine to yield formylglycinamidine ribonucleotide (FGAM) and glutamate. The FGAM synthase complex is composed of three subunits. PurQ produces an ammonia molecule by converting glutamine to glutamate. PurL transfers the ammonia molecule to FGAR to form FGAM in an ATP-dependent manner. PurS interacts with PurQ and PurL and is thought to assist in the transfer of the ammonia molecule from PurQ to PurL. This Synechococcus sp. (strain JA-3-3Ab) (Cyanobacteria bacterium Yellowstone A-Prime) protein is Phosphoribosylformylglycinamidine synthase subunit PurQ.